A 463-amino-acid polypeptide reads, in one-letter code: Probable Xaa-Pro aminopeptidase pepP (463 aa).

Mn(2+) is bound by residues Asp259, Asp270, Glu393, and Glu433.

This sequence belongs to the peptidase M24B family. The cofactor is Mn(2+).

The catalysed reaction is Release of any N-terminal amino acid, including proline, that is linked to proline, even from a dipeptide or tripeptide.. In terms of biological role, catalyzes the removal of a penultimate prolyl residue from the N-termini of peptides. The protein is Probable Xaa-Pro aminopeptidase pepP (pepP) of Pyrenophora tritici-repentis (strain Pt-1C-BFP) (Wheat tan spot fungus).